Reading from the N-terminus, the 1415-residue chain is DNA-directed RNA polymerase subunit beta' (1415 aa).

Residues Cys-72, Cys-74, Cys-87, and Cys-90 each coordinate Zn(2+). Positions 463, 465, and 467 each coordinate Mg(2+). The Zn(2+) site is built by Cys-811, Cys-885, Cys-892, and Cys-895.

The protein belongs to the RNA polymerase beta' chain family. In terms of assembly, the RNAP catalytic core consists of 2 alpha, 1 beta, 1 beta' and 1 omega subunit. When a sigma factor is associated with the core the holoenzyme is formed, which can initiate transcription. It depends on Mg(2+) as a cofactor. Zn(2+) is required as a cofactor.

The catalysed reaction is RNA(n) + a ribonucleoside 5'-triphosphate = RNA(n+1) + diphosphate. Functionally, DNA-dependent RNA polymerase catalyzes the transcription of DNA into RNA using the four ribonucleoside triphosphates as substrates. The chain is DNA-directed RNA polymerase subunit beta' from Cereibacter sphaeroides (strain ATCC 17029 / ATH 2.4.9) (Rhodobacter sphaeroides).